Consider the following 2195-residue polypeptide: Activating signal cointegrator 1 complex subunit 3 (2195 aa).

Residues 31 to 88 (EQVVARNKEIMKKRNEKKKEKDRIIEKGQLTWSYFSDSKQNKEKEKENRQIFNKFKEI) adopt a coiled-coil conformation. A compositionally biased stretch (basic and acidic residues) spans 367–378 (QLKKDDKKRYKN). A disordered region spans residues 367-387 (QLKKDDKKRYKNDQQQQQQQQ). Residues 492-675 (ESAYKSNENI…FIRAPASGTH (184 aa)) form the Helicase ATP-binding 1 domain. 505–512 (APTGAGKT) contacts ATP. Residues 617-620 (DEIH) carry the DEAH box motif. A Helicase C-terminal 1 domain is found at 705-920 (NMNQLCYERL…NVNEAVNWLS (216 aa)). The 307-residue stretch at 980–1286 (MTELGRIASH…GSEGIREISF (307 aa)) folds into the SEC63 1 domain. The Helicase ATP-binding 2 domain maps to 1336–1511 (HTLYYTNNNV…WMGIDRVGLF (176 aa)). 1349-1356 (SPTGSGKT) lines the ATP pocket. A DEAH box motif is present at residues 1453 to 1456 (DEIH). Positions 1545–1750 (SFAAIATYSP…GTIQSKQGAI (206 aa)) constitute a Helicase C-terminal 2 domain. Residues 1810–1969 (PMSMGKIASF…LPHINKDFAD (160 aa)) enclose the SEC63 2 domain. The segment covering 2032 to 2062 (TNNNSNNNDDNNNENNNNNNKKNNNNNNNNN) has biased composition (low complexity). The segment at 2032–2064 (TNNNSNNNDDNNNENNNNNNKKNNNNNNNNNKS) is disordered.

It belongs to the helicase family.

The protein localises to the nucleus. Its subcellular location is the cytoplasm. It is found in the cytosol. It carries out the reaction Couples ATP hydrolysis with the unwinding of duplex DNA by translocating in the 3'-5' direction.. It catalyses the reaction ATP + H2O = ADP + phosphate + H(+). ATPase involved both in DNA repair and rescue of stalled ribosomes. The polypeptide is Activating signal cointegrator 1 complex subunit 3 (ascc3) (Dictyostelium discoideum (Social amoeba)).